The following is a 318-amino-acid chain: Transaldolase (318 aa).

Catalysis depends on lysine 131, which acts as the Schiff-base intermediate with substrate.

This sequence belongs to the transaldolase family. Type 1 subfamily. As to quaternary structure, homodimer.

The protein resides in the cytoplasm. The catalysed reaction is D-sedoheptulose 7-phosphate + D-glyceraldehyde 3-phosphate = D-erythrose 4-phosphate + beta-D-fructose 6-phosphate. The protein operates within carbohydrate degradation; pentose phosphate pathway; D-glyceraldehyde 3-phosphate and beta-D-fructose 6-phosphate from D-ribose 5-phosphate and D-xylulose 5-phosphate (non-oxidative stage): step 2/3. In terms of biological role, transaldolase is important for the balance of metabolites in the pentose-phosphate pathway. This is Transaldolase from Buchnera aphidicola subsp. Cinara cedri (strain Cc).